We begin with the raw amino-acid sequence, 320 residues long: GMP reductase (320 aa).

Cys174 acts as the Thioimidate intermediate in catalysis. Position 203–226 (Ile203–Cys226) interacts with NADP(+).

This sequence belongs to the IMPDH/GMPR family. GuaC type 2 subfamily.

It carries out the reaction IMP + NH4(+) + NADP(+) = GMP + NADPH + 2 H(+). Its function is as follows. Catalyzes the irreversible NADPH-dependent deamination of GMP to IMP. It functions in the conversion of nucleobase, nucleoside and nucleotide derivatives of G to A nucleotides, and in maintaining the intracellular balance of A and G nucleotides. This is GMP reductase from Mesoplasma florum (strain ATCC 33453 / NBRC 100688 / NCTC 11704 / L1) (Acholeplasma florum).